The chain runs to 340 residues: UDP-N-acetylenolpyruvoylglucosamine reductase (340 aa).

An FAD-binding PCMH-type domain is found at 14-185; the sequence is HVEATARWLL…VAVEFNLPLL (172 aa). The active site involves arginine 162. The active-site Proton donor is the serine 235. The active site involves glutamate 332.

The protein belongs to the MurB family. FAD is required as a cofactor.

It is found in the cytoplasm. It catalyses the reaction UDP-N-acetyl-alpha-D-muramate + NADP(+) = UDP-N-acetyl-3-O-(1-carboxyvinyl)-alpha-D-glucosamine + NADPH + H(+). It participates in cell wall biogenesis; peptidoglycan biosynthesis. Cell wall formation. This is UDP-N-acetylenolpyruvoylglucosamine reductase from Xanthomonas oryzae pv. oryzae (strain KACC10331 / KXO85).